The primary structure comprises 278 residues: Hydroxyethylthiazole kinase (278 aa).

Met49 contributes to the substrate binding site. ATP contacts are provided by Asn125 and Ser171. Gly198 contacts substrate.

Belongs to the Thz kinase family. The cofactor is Mg(2+).

It carries out the reaction 5-(2-hydroxyethyl)-4-methylthiazole + ATP = 4-methyl-5-(2-phosphooxyethyl)-thiazole + ADP + H(+). The protein operates within cofactor biosynthesis; thiamine diphosphate biosynthesis; 4-methyl-5-(2-phosphoethyl)-thiazole from 5-(2-hydroxyethyl)-4-methylthiazole: step 1/1. Functionally, catalyzes the phosphorylation of the hydroxyl group of 4-methyl-5-beta-hydroxyethylthiazole (THZ). The polypeptide is Hydroxyethylthiazole kinase (Natronomonas pharaonis (strain ATCC 35678 / DSM 2160 / CIP 103997 / JCM 8858 / NBRC 14720 / NCIMB 2260 / Gabara) (Halobacterium pharaonis)).